Reading from the N-terminus, the 2115-residue chain is Non-reducing polyketide synthase ascC (2115 aa).

The interval 1 to 21 (MTLIQTKHSASAAVFSPQSTA) is disordered. Positions 14-260 (VFSPQSTAPK…HNSRNTELAQ (247 aa)) are N-terminal acylcarrier protein transacylase domain (SAT). The 425-residue stretch at 381–805 (PDSIAIVGSA…GSNSALICSE (425 aa)) folds into the Ketosynthase family 3 (KS3) domain. Active-site for beta-ketoacyl synthase activity residues include C553, H689, and H728. Residues 908-1210 (LTFSGQSRTT…ANPSAHTFQA (303 aa)) form a malonyl-CoA:ACP transacylase (MAT) domain region. Catalysis depends on S995, which acts as the For acyl/malonyl transferase activity. The segment at 1280 to 1406 (PKKVQQLVTL…GDFFATSGEM (127 aa)) is N-terminal hotdog fold. A PKS/mFAS DH domain is found at 1280–1581 (PKKVQQLVTL…FMRIKAAKLE (302 aa)). The interval 1285–1580 (QLVTLKKTEG…QFMRIKAAKL (296 aa)) is product template (PT) domain. H1315 (proton acceptor; for dehydratase activity) is an active-site residue. The C-terminal hotdog fold stretch occupies residues 1428 to 1581 (DAERLRTATA…FMRIKAAKLE (154 aa)). D1492 functions as the Proton donor; for dehydratase activity in the catalytic mechanism. A disordered region spans residues 1587–1624 (ANPGSKTKSTNGNALPSVPRSVPAGPTSAPQQVAPTTM). The span at 1588-1600 (NPGSKTKSTNGNA) shows a compositional bias: polar residues. In terms of domain architecture, Carrier spans 1640–1724 (PSKIADLKSL…PTAALTEGLV (85 aa)). Position 1674 is an O-(pantetheine 4'-phosphoryl)serine (S1674). Residues 1734-1748 (SDSIRNSTGFHTTIP) are compositionally biased toward polar residues. A disordered region spans residues 1734-1767 (SDSIRNSTGFHTTIPATPAELHSNPPDSLDGSTV). The segment at 1777 to 2107 (ARFKLDTMVY…YDFLLGELEN (331 aa)) is thioesterase (TE) domain. Residues S1897 and D2045 each act as for thioesterase activity in the active site.

It catalyses the reaction 3 malonyl-CoA + acetyl-CoA + 2 H(+) = orsellinate + 3 CO2 + 4 CoA. It participates in secondary metabolite biosynthesis; terpenoid biosynthesis. In terms of biological role, non-reducing polyketide synthase; part of the asc-1 gene cluster that mediates the biosynthesis of both ascochlorin and ascofuranone, a strong inhibitor of cyanide-insensitive alternative oxidases and a promising drug candidate against African trypanosomiasis. The first step in the pathway is performed by the non-reducing polyketide synthase ascC that produces orsellinic acid by condensing acetyl-CoA with 3 malonyl-CoA units. Orsellinic acid is then prenylated by the prenyltransferase ascA to yield ilicicolinic acid B. Ilicicolinic acid B is further reduced to ilicicolin B by the reductase ascB. The halogenase ascD then chlorinates ilicicolin B to produce ilicicolin A which is converted to ilicicolin A epoxide by the cytochrome P450 monooxygenase ascE that catalyzes stereoselective epoxidation of the terminal double bond of the prenyl group. Ilicicolin A epoxide is the last common precursor for the biosynthesis of ascofuranone and ascochlorin. The terpene cyclase ascF produces a monocyclic terpene, and the cyclization reaction is proposed to be initiated by protonation of the terminal epoxide of ilicicolin A epoxide to generate a monocyclic tertiarycation, which is followed by a series of hydride and methyl shifts with abstraction of proton, leading to the formation of the (14S,15R,19R)-trimethylcyclohexanone ring structure of ilicicolin C, which is finally reduced to ascochlorin by the dehydrogenase ascG. On the other hand, ilicicolin A epoxide is hydroxylated by the cytochrome P450 monooxygenase ascH, and the resultant product is cyclized by the terpene cyclase ascI to ascofuranol via protonation-initiated epoxide ring opening, which facilitates the 6-endo-tet cyclization to form the tetrahy-drofuran ring. Finally, ascofuranol is oxidized into ascofuranone by ascJ. This chain is Non-reducing polyketide synthase ascC, found in Acremonium egyptiacum (Oospora egyptiaca).